The following is a 932-amino-acid chain: Adhesion G protein-coupled receptor E2 (932 aa).

A signal peptide spans 1–15; that stretch reads MWGFWLLLFWGFSGT. The Extracellular portion of the chain corresponds to 16 to 652; the sequence is HRWGMTTLAI…TMEFSLYIIS (637 aa). 2 EGF-like domains span residues 32-69 and 81-119; these read GVNE…SNGQ and DVNE…SAGG. Intrachain disulfides connect C36-C48, C42-C57, C85-C98, C92-C107, C137-C149, C143-C158, C160-C171, C177-C189, C183-C198, C226-C239, and C233-C248. Residues 133 to 172 enclose the EGF-like 3; calcium-binding domain; that stretch reads DVDECLTIGICPKNSNCSNSVGSYSCTCQSGFVSNGSTCE. N-linked (GlcNAc...) asparagine glycosylation is found at N148 and N167. In terms of domain architecture, EGF-like 4; calcium-binding spans 173–210; it reads DEDECVTRNACPEHATCHNTLGSYYCTCNEGLEFSGGG. One can recognise an EGF-like 5; calcium-binding domain in the interval 222-260; sequence DVDECSRNSTLCGPSFICINTLGSYSCSCPAGFSLSTFQ. The N-linked (GlcNAc...) asparagine glycan is linked to N229. Residues N269, N283, N309, N333, N344, N363, N405, N417, N474, and N499 are each glycosylated (N-linked (GlcNAc...) asparagine). Positions 272–307 constitute an EGF-like 6; calcium-binding domain; the sequence is DIDECDDICPSNSSCTNTLGSYFCTCHPGFASSNGQ. 2 disulfides stabilise this stretch: C276–C286 and C280–C295. The region spanning 319–354 is the EGF-like 7; calcium-binding domain; sequence DIDECTQDPFRCGRNSSCTNVPGSYNCSCLPDFRMD. 2 cysteine pairs are disulfide-bonded: C323–C336 and C330–C345. Positions 482–643 constitute a GAIN-B domain; that stretch reads EYLEIESKVI…AIIMASGELT (162 aa). The Cell attachment site motif lies at 507-509; it reads RGD. Disulfide bonds link C596/C625 and C613/C627. The segment at 596–643 is GPS; the sequence is CVSWNTDVEDGRWTPSGCETVEASETHTVCSCNRMTNLAIIMASGELT. The chain crosses the membrane as a helical span at residues 653–673; the sequence is YVGTVISLVCLALAIATFLLF. Residues 674-681 are Cytoplasmic-facing; it reads RAVQNHNT. Residues 682-702 form a helical membrane-spanning segment; that stretch reads YLHLHLCVCLFLAKILFLTGI. The Extracellular segment spans residues 703–719; the sequence is DKTDNQTACAIIAGFLH. N707 carries N-linked (GlcNAc...) asparagine glycosylation. The helical transmembrane segment at 720–740 threads the bilayer; it reads YLFLACFFWMLVEAVMLFLMV. The Cytoplasmic portion of the chain corresponds to 741–756; it reads RNLKVVNYFSSRNIKM. A helical transmembrane segment spans residues 757-777; the sequence is LHLCAFGYGLPVVVVIISATV. The Extracellular segment spans residues 778-795; that stretch reads HPWGYGMHNRCWLNTETG. The chain crosses the membrane as a helical span at residues 796–816; the sequence is FIWSFLGPVCMIITINSALLA. Over 817-849 the chain is Cytoplasmic; that stretch reads WTLWVLRQKLCSVNSEVSKLKDTRLLTFKAIAQ. The chain crosses the membrane as a helical span at residues 850 to 870; it reads IFILGCSWVLGIFQIGPLASI. At 871–872 the chain is on the extracellular side; the sequence is MA. A helical membrane pass occupies residues 873-893; that stretch reads YLFTTINSLQGAFIFLIHCLL. Residues 894 to 932 are Cytoplasmic-facing; it reads NRQVRDEYRKLLTRKTDLSSHSQTSGILLSSMPSTSKTG.

The protein belongs to the G-protein coupled receptor 2 family. Adhesion G-protein coupled receptor (ADGR) subfamily.

The protein resides in the cell membrane. In terms of biological role, orphan receptor involved in cell adhesion and probably in cell-cell interactions involved specifically cells of the immune system. May play a role in regulatory T-cells (Treg) development. This is Adhesion G protein-coupled receptor E2 (Adgre1) from Rattus norvegicus (Rat).